Reading from the N-terminus, the 83-residue chain is Putative beta-neurotoxin RjAa17f (83 aa).

Positions 1-18 are cleaved as a signal peptide; that stretch reads MKILIFIIASFMLIGVEC. The region spanning 19 to 82 is the LCN-type CS-alpha/beta domain; that stretch reads KEGYPMGRNG…VWDFSNIKCR (64 aa). 4 disulfide bridges follow: C29-C81, C33-C55, C40-C62, and C44-C64.

Belongs to the long (4 C-C) scorpion toxin superfamily. Sodium channel inhibitor family. Beta subfamily. As to expression, expressed by the venom gland.

It localises to the secreted. Functionally, beta toxins bind voltage-independently at site-4 of sodium channels (Nav) and shift the voltage of activation toward more negative potentials thereby affecting sodium channel activation and promoting spontaneous and repetitive firing. This is Putative beta-neurotoxin RjAa17f from Rhopalurus junceus (Caribbean blue scorpion).